The primary structure comprises 193 residues: Ion-translocating oxidoreductase complex subunit A (193 aa).

6 helical membrane passes run 4-24 (FFFI…KFLG), 39-59 (IGMG…SWMV), 71-91 (FLRI…IEVV), 102-122 (ALGI…VALL), 134-154 (LLYG…FAGM), and 167-187 (FAGA…FMGF).

Belongs to the NqrDE/RnfAE family. As to quaternary structure, the complex is composed of six subunits: RnfA, RnfB, RnfC, RnfD, RnfE and RnfG.

Its subcellular location is the cellular chromatophore membrane. Its function is as follows. Part of a membrane-bound complex that couples electron transfer with translocation of ions across the membrane. The chain is Ion-translocating oxidoreductase complex subunit A from Cereibacter sphaeroides (strain ATCC 17029 / ATH 2.4.9) (Rhodobacter sphaeroides).